A 142-amino-acid chain; its full sequence is Small heat shock protein IbpB (142 aa).

A sHSP domain is found at Thr-26 to Arg-137.

The protein belongs to the small heat shock protein (HSP20) family. In terms of assembly, homodimer. Forms homomultimers of about 100-150 subunits at optimal growth temperatures. Conformation changes to oligomers at high temperatures or high ionic concentrations. The decrease in size of the multimers is accompanied by an increase in chaperone activity.

The protein localises to the cytoplasm. In terms of biological role, associates with aggregated proteins, together with IbpA, to stabilize and protect them from irreversible denaturation and extensive proteolysis during heat shock and oxidative stress. Aggregated proteins bound to the IbpAB complex are more efficiently refolded and reactivated by the ATP-dependent chaperone systems ClpB and DnaK/DnaJ/GrpE. Its activity is ATP-independent. The chain is Small heat shock protein IbpB from Enterobacter sp. (strain 638).